A 119-amino-acid polypeptide reads, in one-letter code: Large ribosomal subunit protein uL22 (119 aa).

Belongs to the universal ribosomal protein uL22 family. Part of the 50S ribosomal subunit.

Functionally, this protein binds specifically to 23S rRNA; its binding is stimulated by other ribosomal proteins, e.g. L4, L17, and L20. It is important during the early stages of 50S assembly. It makes multiple contacts with different domains of the 23S rRNA in the assembled 50S subunit and ribosome. The globular domain of the protein is located near the polypeptide exit tunnel on the outside of the subunit, while an extended beta-hairpin is found that lines the wall of the exit tunnel in the center of the 70S ribosome. The polypeptide is Large ribosomal subunit protein uL22 (Rickettsia akari (strain Hartford)).